The primary structure comprises 529 residues: Bifunctional purine biosynthesis protein PurH (529 aa).

In terms of domain architecture, MGS-like spans 1-148; the sequence is MQQRRPIRRA…KNHKDVAIVV (148 aa). Lys-287 is subject to N6-acetyllysine.

It belongs to the PurH family.

It carries out the reaction (6R)-10-formyltetrahydrofolate + 5-amino-1-(5-phospho-beta-D-ribosyl)imidazole-4-carboxamide = 5-formamido-1-(5-phospho-D-ribosyl)imidazole-4-carboxamide + (6S)-5,6,7,8-tetrahydrofolate. It catalyses the reaction IMP + H2O = 5-formamido-1-(5-phospho-D-ribosyl)imidazole-4-carboxamide. It functions in the pathway purine metabolism; IMP biosynthesis via de novo pathway; 5-formamido-1-(5-phospho-D-ribosyl)imidazole-4-carboxamide from 5-amino-1-(5-phospho-D-ribosyl)imidazole-4-carboxamide (10-formyl THF route): step 1/1. It participates in purine metabolism; IMP biosynthesis via de novo pathway; IMP from 5-formamido-1-(5-phospho-D-ribosyl)imidazole-4-carboxamide: step 1/1. The protein is Bifunctional purine biosynthesis protein PurH of Escherichia coli O139:H28 (strain E24377A / ETEC).